Consider the following 569-residue polypeptide: MEDVKELIVRLAAENALKYGKADTKAVIGKILYMRPDLKQNVRELIPLVEEAVRAVNEMPKEALEGIVGEVKKEKKEEVRKWPDLPKAERGKVVTRVAPEPNGYPTLGHAKGLLVPFIYARLYDGKFLLRFEDTNPRVERLEYYEAIRNEFSRLLEACEEELGLSPGRWDEEIIESYHLEEMYSLAKKLIEAGKAYVCTCPAAEVRKRRKLGISCDHRDQPIEKNLELWEKMLNGGFREGEAHLRLKTDMSHPNVTMRDPGIFRVIEAEHPIHGDKYRVYPVYDFSVSVMDSLTGVTHAFRSKEFEPHVDVQRHIVRALGLREYEMIQFGRITVEGIPLSKRYIRPLVESGILEGWDDPRIPTLRGLFRRGINPRAIVRFFYELGPSKVDATVNMEAIASINRKILDPIAERYMFVPNPIKAKIEGLTPPVIAQVEVHPDSKRKREIRLDESEVFIASSDLEGLKPGDELRLRGLVNVTIRSVNPDEVSLRVSEEQRVKGVKIIQWAPVRNGVPARLFVPESPYSFRMLGGYGEPALRGIKEGEIVQFVRVGFARLDRRDPLTFILSHD.

The 'HIGH' region signature appears at 99–109 (PEPNGYPTLGH).

Belongs to the class-I aminoacyl-tRNA synthetase family. Glutamate--tRNA ligase type 2 subfamily.

The protein resides in the cytoplasm. The catalysed reaction is tRNA(Glu) + L-glutamate + ATP = L-glutamyl-tRNA(Glu) + AMP + diphosphate. Functionally, catalyzes the attachment of glutamate to tRNA(Glu) in a two-step reaction: glutamate is first activated by ATP to form Glu-AMP and then transferred to the acceptor end of tRNA(Glu). The polypeptide is Glutamate--tRNA ligase (Korarchaeum cryptofilum (strain OPF8)).